The chain runs to 453 residues: MHKVELPRAQKLAERAFANLERFLHIEAVSGIVLLIAAVAALIWANSPAADSYEALWHTPLTFGVGSHVYSQSLHFWINDGLMTIFFLVVGMEIRREIHEGALSSLRQATLPMAAAVGGVAVPALLYLSFGHASADQQGWAVPTATDIAFAVGVLALLGKSIPSNVRVFLLALAIIDDIIAVLIIAFFYSGGLDYTGFGVALIGLLMVIGLQKIGVGSAYAYVLPGAIVWLGILLTGAHPTLAGVVLGLMTPVTAMPMRERPLDAITRFTGELLGRAKAPEQDASDLMDPLKRLRLAQRELLPPVVRMQGTLHPWVAFGIMPVFALANAGVSLSGVDLSVEGPQWVMIAVAVALVAGKPLGIVSVSWLMVRLGWCVLPAEINWRSIVLVGLLAGIGFTMSIFIANLAFVDPGSLGAAKLGVLSASLIAAVLGLTWGVWSLRSTASATKAGSPT.

The next 12 membrane-spanning stretches (helical) occupy residues 23 to 43, 74 to 94, 111 to 131, 139 to 159, 168 to 188, 191 to 211, 214 to 234, 235 to 255, 316 to 336, 345 to 365, 386 to 406, and 419 to 439; these read FLHI…AALI, LHFW…GMEI, LPMA…LSFG, GWAV…ALLG, VFLL…IAFF, GGLD…VIGL, IGVG…LGIL, LTGA…PVTA, VAFG…LSGV, WVMI…IVSV, IVLV…IANL, and LGVL…GVWS.

This sequence belongs to the NhaA Na(+)/H(+) (TC 2.A.33) antiporter family.

It is found in the cell inner membrane. The enzyme catalyses Na(+)(in) + 2 H(+)(out) = Na(+)(out) + 2 H(+)(in). In terms of biological role, na(+)/H(+) antiporter that extrudes sodium in exchange for external protons. This Pseudomonas putida (strain ATCC 700007 / DSM 6899 / JCM 31910 / BCRC 17059 / LMG 24140 / F1) protein is Na(+)/H(+) antiporter NhaA 2.